The following is a 215-amino-acid chain: Protein GET1 (215 aa).

At 1 to 4 the chain is on the lumenal side; that stretch reads MINL. A helical transmembrane segment spans residues 5 to 24; that stretch reads ALVIFLCTLLNQIVSWVGKS. Residues 25 to 108 lie on the Cytoplasmic side of the membrane; that stretch reads VLQEIAFTAY…SFSKKFSTLL (84 aa). A coiled-coil region spans residues 73 to 94; the sequence is AKLRRKLDKGLADLEKTNNTLS. Residues 109 to 129 traverse the membrane as a helical segment; that stretch reads WLMTTGAQFLLSWWFRKQPIF. Over 130-153 the chain is Lumenal; sequence WLPEGWVPYPVAWLLSFPSAPIGS. Residues 154–170 form a helical membrane-spanning segment; it reads VSSGAWGAICRRVLSTL. Residues 171–215 lie on the Cytoplasmic side of the membrane; it reads QEIIQSLLAPSPAATGPVPTGPSSAKNDQPEAKIEALALEHEKLD. The interval 182–202 is disordered; the sequence is PAATGPVPTGPSSAKNDQPEA.

It belongs to the WRB/GET1 family. Interacts with GET3.

Its subcellular location is the endoplasmic reticulum membrane. In terms of biological role, required for the post-translational delivery of tail-anchored (TA) proteins to the endoplasmic reticulum. Acts as a membrane receptor for soluble GET3, which recognizes and selectively binds the transmembrane domain of TA proteins in the cytosol. This chain is Protein GET1, found in Cryptococcus neoformans var. neoformans serotype D (strain JEC21 / ATCC MYA-565) (Filobasidiella neoformans).